The sequence spans 304 residues: tRNA uridine(34) hydroxylase (304 aa).

Positions 124-219 constitute a Rhodanese domain; it reads QDEETLLIDT…YLETIPKEES (96 aa). C179 serves as the catalytic Cysteine persulfide intermediate.

Belongs to the TrhO family.

It catalyses the reaction uridine(34) in tRNA + AH2 + O2 = 5-hydroxyuridine(34) in tRNA + A + H2O. Functionally, catalyzes oxygen-dependent 5-hydroxyuridine (ho5U) modification at position 34 in tRNAs. This is tRNA uridine(34) hydroxylase from Bartonella quintana (strain Toulouse) (Rochalimaea quintana).